The following is a 273-amino-acid chain: MQKTVLEPQRGFSFENCERNAALQRALPGLRVPHARKTGTTIAGLVFQDGVILGADTRATNDSVVADKICEKIHFIAPKIYCCGAGVAADAEMTTRMAASNMELHALSTGRECRVATVTRMLRQTLFRYQGYVGASLIVGGVDFTGPQLYSVHPHGSYSRLPFTALGSGQDAAIAVLEDRFQPNMTLEAAQELLVEAITAGILGDLGSGGNVDACVITAAGAKMLRALSSPTKPIERSSQYRFAPGTTPVLSQTVVPLTLELVEETVQAMDVE.

M1 is modified (N-acetylmethionine). Residues M1 to G39 constitute a propeptide, removed in mature form. Residue T40 is the Nucleophile of the active site. At S230 the chain carries Phosphoserine.

The protein belongs to the peptidase T1B family. In terms of assembly, the 26S proteasome consists of a 20S proteasome core and two 19S regulatory subunits. The 20S proteasome core is composed of 28 subunits that are arranged in four stacked rings, resulting in a barrel-shaped structure. The two end rings are each formed by seven alpha subunits, and the two central rings are each formed by seven beta subunits. The catalytic chamber with the active sites is on the inside of the barrel. Component of the immunoproteasome, where it displaces the equivalent housekeeping subunit PSMB7. Component of the spermatoproteasome, a form of the proteasome specifically found in testis. Autocleaved. The resulting N-terminal Thr residue of the mature subunit is responsible for the nucleophile proteolytic activity.

It localises to the cytoplasm. Its subcellular location is the nucleus. It carries out the reaction Cleavage of peptide bonds with very broad specificity.. Functionally, the proteasome is a multicatalytic proteinase complex which is characterized by its ability to cleave peptides with Arg, Phe, Tyr, Leu, and Glu adjacent to the leaving group at neutral or slightly basic pH. The proteasome has an ATP-dependent proteolytic activity. This subunit is involved in antigen processing to generate class I binding peptides. This chain is Proteasome subunit beta type-10 (PSMB10), found in Bos taurus (Bovine).